Reading from the N-terminus, the 169-residue chain is MKKLKRLTLILYNSYDKTRWHEAHKRAIARAAPICYAFDCNLAIMDFPCKMEDILNIKTTIGNSGEYLEKLIEKNRFFIVDKFLPQFGIPIASTSKPDEKKAITPLDTAYLLKKKPIGVYVGLGRHGLPKDIMESCVYHLDVTEKRVSLETCTAIGSIPAVIYCYTKYI.

This is an uncharacterized protein from Methanocaldococcus jannaschii (strain ATCC 43067 / DSM 2661 / JAL-1 / JCM 10045 / NBRC 100440) (Methanococcus jannaschii).